An 874-amino-acid chain; its full sequence is Bifunctional uridylyltransferase/uridylyl-removing enzyme (874 aa).

A uridylyltransferase region spans residues 1 to 336 (MIDTSTITNP…DNGKTVETIQ (336 aa)). Positions 337-695 (LSDDFQIRGH…LSKKATRGGT (359 aa)) are uridylyl-removing. The HD domain maps to 455 to 577 (VDEHSVRLIK…VRDEERLDYL (123 aa)). 2 ACT domains span residues 696–779 (EVFV…RAPR) and 802–874 (TMEL…TPQD).

Belongs to the GlnD family. Mg(2+) serves as cofactor.

The catalysed reaction is [protein-PII]-L-tyrosine + UTP = [protein-PII]-uridylyl-L-tyrosine + diphosphate. The enzyme catalyses [protein-PII]-uridylyl-L-tyrosine + H2O = [protein-PII]-L-tyrosine + UMP + H(+). Its activity is regulated as follows. Uridylyltransferase (UTase) activity is inhibited by glutamine, while glutamine activates uridylyl-removing (UR) activity. Its function is as follows. Modifies, by uridylylation and deuridylylation, the PII regulatory proteins (GlnB and homologs), in response to the nitrogen status of the cell that GlnD senses through the glutamine level. Under low glutamine levels, catalyzes the conversion of the PII proteins and UTP to PII-UMP and PPi, while under higher glutamine levels, GlnD hydrolyzes PII-UMP to PII and UMP (deuridylylation). Thus, controls uridylylation state and activity of the PII proteins, and plays an important role in the regulation of nitrogen assimilation and metabolism. The chain is Bifunctional uridylyltransferase/uridylyl-removing enzyme from Photobacterium profundum (strain SS9).